Reading from the N-terminus, the 506-residue chain is Acetaldehyde dehydrogenase 2 (506 aa).

Residue 240–245 coordinates NAD(+); that stretch reads GETTTG. Catalysis depends on residues Glu262 and Cys301.

The protein belongs to the aldehyde dehydrogenase family.

The catalysed reaction is an aldehyde + NAD(+) + H2O = a carboxylate + NADH + 2 H(+). Its pathway is alcohol metabolism; ethanol degradation; acetate from ethanol: step 2/2. The protein operates within ketone degradation; acetoin degradation. In terms of biological role, involved in the catabolism of acetoin and ethanol. This Cupriavidus necator (strain ATCC 17699 / DSM 428 / KCTC 22496 / NCIMB 10442 / H16 / Stanier 337) (Ralstonia eutropha) protein is Acetaldehyde dehydrogenase 2 (acoD).